The chain runs to 285 residues: S-methyl-5'-thioadenosine phosphorylase (285 aa).

Residues Ser10, Arg52–His53, and Thr85–Ala86 contribute to the phosphate site. A substrate-binding site is contributed by Met188. Residue Thr189 participates in phosphate binding. Asp212–Asp214 provides a ligand contact to substrate.

The protein belongs to the PNP/MTAP phosphorylase family. MTAP subfamily. In terms of assembly, homotrimer.

The protein resides in the cytoplasm. It localises to the nucleus. The enzyme catalyses S-methyl-5'-thioadenosine + phosphate = 5-(methylsulfanyl)-alpha-D-ribose 1-phosphate + adenine. The protein operates within amino-acid biosynthesis; L-methionine biosynthesis via salvage pathway; S-methyl-5-thio-alpha-D-ribose 1-phosphate from S-methyl-5'-thioadenosine (phosphorylase route): step 1/1. Functionally, catalyzes the reversible phosphorylation of S-methyl-5'-thioadenosine (MTA) to adenine and 5-methylthioribose-1-phosphate. Involved in the breakdown of MTA, a major by-product of polyamine biosynthesis. Responsible for the first step in the methionine salvage pathway after MTA has been generated from S-adenosylmethionine. Has broad substrate specificity with 6-aminopurine nucleosides as preferred substrates. This Caenorhabditis briggsae protein is S-methyl-5'-thioadenosine phosphorylase.